The primary structure comprises 222 residues: Alpha-S2-casein (222 aa).

Positions 1-15 (MKFFIFTCLLAVALA) are cleaved as a signal peptide. Residues Ser-23, Ser-24, Ser-25, Ser-28, Ser-46, Ser-71, Ser-72, Ser-73, Ser-76, Ser-144, Ser-146, Ser-150, and Ser-158 each carry the phosphoserine modification. Residues 76-140 (SAEVATEEVK…AVPITPTLNR (65 aa)) constitute a repeat. The segment at residues 158-222 (STEVFTKKTK…TKVIPYVRYL (65 aa)) is a repeat.

Belongs to the alpha-casein family. In terms of tissue distribution, mammary gland specific. Secreted in milk.

It is found in the secreted. Functionally, important role in the capacity of milk to transport calcium phosphate. In terms of biological role, casocidin-I inhibits the growth of E.coli and S.carnosus. The polypeptide is Alpha-S2-casein (CSN1S2) (Bos taurus (Bovine)).